Consider the following 283-residue polypeptide: Bifunctional protein FolD (283 aa).

NADP(+) contacts are provided by residues G165–S167, S190, and V231.

Belongs to the tetrahydrofolate dehydrogenase/cyclohydrolase family. As to quaternary structure, homodimer.

It catalyses the reaction (6R)-5,10-methylene-5,6,7,8-tetrahydrofolate + NADP(+) = (6R)-5,10-methenyltetrahydrofolate + NADPH. The enzyme catalyses (6R)-5,10-methenyltetrahydrofolate + H2O = (6R)-10-formyltetrahydrofolate + H(+). Its pathway is one-carbon metabolism; tetrahydrofolate interconversion. Catalyzes the oxidation of 5,10-methylenetetrahydrofolate to 5,10-methenyltetrahydrofolate and then the hydrolysis of 5,10-methenyltetrahydrofolate to 10-formyltetrahydrofolate. The sequence is that of Bifunctional protein FolD from Bacillus pumilus (strain SAFR-032).